Here is a 935-residue protein sequence, read N- to C-terminus: Transmembrane channel-like protein 1 (935 aa).

Disordered regions lie at residues Met-1–Lys-21 and Glu-37–Leu-204. Composition is skewed to basic and acidic residues over residues Glu-37 to Asp-47, Arg-54 to His-79, Asp-109 to Val-136, Asn-152 to Glu-163, and Pro-172 to Ser-184. 10 consecutive transmembrane segments (helical) span residues Ser-303–Pro-340, Arg-392–Glu-423, Leu-480–Ser-510, Trp-523–Leu-550, Pro-555–Arg-589, Trp-633–Leu-670, Val-690–Tyr-710, Leu-714–Cys-736, Asn-751–Ser-774, and Leu-818–Leu-851. Positions Glu-874–Ser-886 are enriched in basic and acidic residues. The tract at residues Glu-874–Arg-935 is disordered. Composition is skewed to polar residues over residues Ser-899–Gly-919 and Gln-926–Arg-935.

The protein belongs to the TMC family. As to quaternary structure, interacts specifically with isoform CD3 of PCDH15A (via cytoplasmic domain). As to expression, in adults, expression is restricted to the hair cells of inner ear and lateral line organ. Expressed at higher levels in the larval lateral-line neuromasts than in the larval inner ear. Expressed in the sensory hair cell patches of the ear at 4 days post fertilization (dpf).

It localises to the cell membrane. The enzyme catalyses Ca(2+)(in) = Ca(2+)(out). Functionally, pore-forming subunit of the mechanotransducer (MET) non-selective cation channel complex located at the tips of hair-cell stereocilia. Highly permeable to calcium and likely transports monovalent cations. This is Transmembrane channel-like protein 1 from Danio rerio (Zebrafish).